The chain runs to 807 residues: Leucine--tRNA ligase (807 aa).

Positions 40–51 (PYPSGQGLHVGH) match the 'HIGH' region motif. Positions 575-579 (KMSKS) match the 'KMSKS' region motif. Lys578 provides a ligand contact to ATP.

It belongs to the class-I aminoacyl-tRNA synthetase family.

The protein resides in the cytoplasm. It carries out the reaction tRNA(Leu) + L-leucine + ATP = L-leucyl-tRNA(Leu) + AMP + diphosphate. In Latilactobacillus sakei subsp. sakei (strain 23K) (Lactobacillus sakei subsp. sakei), this protein is Leucine--tRNA ligase.